The chain runs to 854 residues: DNA mismatch repair protein MutS (854 aa).

615 to 622 (GPNMGGKS) is a binding site for ATP.

It belongs to the DNA mismatch repair MutS family.

In terms of biological role, this protein is involved in the repair of mismatches in DNA. It is possible that it carries out the mismatch recognition step. This protein has a weak ATPase activity. The chain is DNA mismatch repair protein MutS from Aliivibrio fischeri (strain ATCC 700601 / ES114) (Vibrio fischeri).